The sequence spans 293 residues: Probable metal transport system membrane protein TC_0698 (293 aa).

7 helical membrane-spanning segments follow: residues 18–38, 41–61, 68–88, 101–121, 142–162, 186–206, and 242–262; these read SLLAAFGASIAGGIVGSYIVV, IVSISGSIAHSILGGVGIALW, LPISPLHGAIASAIFVAICIG, IISMIWSIGMAVGMLCISKLP, DLYFLGILDLLIVATVSICHT, FLLLILTAITTVVLMYVMGVI, and FLGIILAYILDLPVGPIIAIL.

The protein belongs to the ABC-3 integral membrane protein family.

It is found in the cell inner membrane. Part of an ATP-driven transport system TC_0696/TC_0697/TC_0698 for a metal. The protein is Probable metal transport system membrane protein TC_0698 of Chlamydia muridarum (strain MoPn / Nigg).